The following is an 888-amino-acid chain: 3-hydroxy-3-methylglutaryl-coenzyme A reductase (888 aa).

Topologically, residues 1-9 (MLSRLFRMH) are cytoplasmic. Residues 10 to 39 (GLFVASHPWEVIVGTVTLTICMMSMNMFTG) traverse the membrane as a helical segment. At 40 to 56 (NNKICGWNYECPKLEED) the chain is on the lumenal side. A helical membrane pass occupies residues 57–78 (VLSSDIIILTITRCIAILYIYF). The SSD domain occupies 61-218 (DIIILTITRC…MTFFPACVSL (158 aa)). Positions 75–78 (YIYF) match the INSIG-binding motif motif. Topologically, residues 79 to 89 (QFQNLRQLGSK) are cytoplasmic. Lysine 89 participates in a covalent cross-link: Glycyl lysine isopeptide (Lys-Gly) (interchain with G-Cter in ubiquitin). The chain crosses the membrane as a helical span at residues 90 to 114 (YILGIAGLFTIFSSFVFSTVVIHFL). Residues 115-123 (DKELTGLNE) are Lumenal-facing. A helical transmembrane segment spans residues 124-149 (ALPFFLLLVDLSRASALAKFALSSNS). Residues 150 to 159 (QDEVRENIAR) lie on the Cytoplasmic side of the membrane. A helical transmembrane segment spans residues 160 to 187 (GMAILGPTFTLDALVECLVIGVGTMSGV). Residues 188-191 (RQLE) lie on the Lumenal side of the membrane. The helical transmembrane segment at 192-220 (IMCCFGCMSVLANYFVFMTFFPACVSLVL) threads the bilayer. Topologically, residues 221-248 (ELSRESREGRPIWQLSHFARVLEEEENK) are cytoplasmic. Residue lysine 248 forms a Glycyl lysine isopeptide (Lys-Gly) (interchain with G-Cter in ubiquitin) linkage. The chain crosses the membrane as a helical span at residues 249-275 (PNPVTQRVKMIMSLGLVLVHAHSRWIA). At 276-314 (DPSPQNSTADNSKVSLGLDENVSKRIEPSVSLWQFYLSK) the chain is on the lumenal side. Residues asparagine 281 and asparagine 296 are each glycosylated (N-linked (GlcNAc...) asparagine). The chain crosses the membrane as a helical span at residues 315–339 (MISMDIEQVITLSLALLLAVKYIFF). The Cytoplasmic portion of the chain corresponds to 340 to 888 (EQAETESTLS…LQGTCTKKAA (549 aa)). Active-site charge relay system residues include glutamate 559, lysine 691, and aspartate 767. Catalysis depends on histidine 866, which acts as the Proton donor. Serine 872 is modified (phosphoserine; by AMPK).

This sequence belongs to the HMG-CoA reductase family. As to quaternary structure, homotetramer. Homodimer. Interacts (via its SSD) with INSIG1; the interaction, accelerated by sterols, leads to the recruitment of HMGCR to AMFR/gp78 for its ubiquitination by the sterol-mediated ERAD pathway. Interacts with UBIAD1. In terms of processing, undergoes sterol-mediated ubiquitination and ER-associated degradation (ERAD). Accumulation of sterols in the endoplasmic reticulum (ER) membrane, triggers binding of the reductase to the ER membrane protein INSIG1 or INSIG2. The INSIG1 binding leads to the recruitment of the ubiquitin ligase, AMFR/gp78, RNF139 or RNF145, initiating ubiquitination of the reductase. The ubiquitinated reductase is then extracted from the ER membrane and delivered to cytosolic 26S proteosomes by a mechanism probably mediated by the ATPase Valosin-containing protein VCP/p97. The INSIG2-binding leads to the recruitment of the ubiquitin ligase RNF139, initiating ubiquitination of the reductase. Lys-248 is the main site of ubiquitination. Ubiquitination is enhanced by the presence of a geranylgeranylated protein. Post-translationally, N-glycosylated. Deglycosylated by NGLY1 on release from the endoplasmic reticulum (ER) in a sterol-mediated manner. Phosphorylated. Phosphorylation at Ser-872 reduces the catalytic activity.

The protein localises to the endoplasmic reticulum membrane. Its subcellular location is the peroxisome membrane. It carries out the reaction (R)-mevalonate + 2 NADP(+) + CoA = (3S)-3-hydroxy-3-methylglutaryl-CoA + 2 NADPH + 2 H(+). It functions in the pathway metabolic intermediate biosynthesis; (R)-mevalonate biosynthesis; (R)-mevalonate from acetyl-CoA: step 3/3. Its activity is regulated as follows. Regulated by a negative feedback mechanism through sterols and non-sterol metabolites derived from mevalonate. Phosphorylation at Ser-872 down-regulates the catalytic activity. Its function is as follows. Catalyzes the conversion of (3S)-hydroxy-3-methylglutaryl-CoA (HMG-CoA) to mevalonic acid, the rate-limiting step in the synthesis of cholesterol and other isoprenoids, thus plays a critical role in cellular cholesterol homeostasis. The sequence is that of 3-hydroxy-3-methylglutaryl-coenzyme A reductase (HMGCR) from Bos taurus (Bovine).